Here is a 557-residue protein sequence, read N- to C-terminus: DNA ligase B (557 aa).

Residue Lys125 is the N6-AMP-lysine intermediate of the active site.

Belongs to the NAD-dependent DNA ligase family. LigB subfamily.

The enzyme catalyses NAD(+) + (deoxyribonucleotide)n-3'-hydroxyl + 5'-phospho-(deoxyribonucleotide)m = (deoxyribonucleotide)n+m + AMP + beta-nicotinamide D-nucleotide.. In terms of biological role, catalyzes the formation of phosphodiester linkages between 5'-phosphoryl and 3'-hydroxyl groups in double-stranded DNA using NAD as a coenzyme and as the energy source for the reaction. The protein is DNA ligase B of Pseudomonas entomophila (strain L48).